The primary structure comprises 299 residues: Protease HtpX homolog (299 aa).

2 helical membrane-spanning segments follow: residues 15 to 35 and 39 to 59; these read ILLL…GYLF and GLGG…SMIF. A Zn(2+)-binding site is contributed by histidine 143. Glutamate 144 is a catalytic residue. Histidine 147 is a Zn(2+) binding site. The next 2 helical transmembrane spans lie at 158–178 and 198–218; these read IAVA…RMMW and IIML…ATLV. Position 227 (glutamate 227) interacts with Zn(2+).

It belongs to the peptidase M48B family. Zn(2+) is required as a cofactor.

It localises to the cell membrane. In Streptococcus pneumoniae (strain Taiwan19F-14), this protein is Protease HtpX homolog.